Reading from the N-terminus, the 304-residue chain is Quinolinate synthase (304 aa).

The iminosuccinate site is built by H24 and S41. C86 contributes to the [4Fe-4S] cluster binding site. Iminosuccinate contacts are provided by residues 112-114 and S129; that span reads YVN. C171 provides a ligand contact to [4Fe-4S] cluster. Iminosuccinate contacts are provided by residues 197–199 and T214; that span reads HPE. C259 serves as a coordination point for [4Fe-4S] cluster.

This sequence belongs to the quinolinate synthase family. Type 2 subfamily. [4Fe-4S] cluster serves as cofactor.

The protein localises to the cytoplasm. It catalyses the reaction iminosuccinate + dihydroxyacetone phosphate = quinolinate + phosphate + 2 H2O + H(+). The protein operates within cofactor biosynthesis; NAD(+) biosynthesis; quinolinate from iminoaspartate: step 1/1. In terms of biological role, catalyzes the condensation of iminoaspartate with dihydroxyacetone phosphate to form quinolinate. This chain is Quinolinate synthase, found in Geobacter metallireducens (strain ATCC 53774 / DSM 7210 / GS-15).